Reading from the N-terminus, the 215-residue chain is Probable GTP-binding protein EngB (215 aa).

Positions 30-204 constitute an EngB-type G domain; the sequence is TGIEVAFAGR…RQKLDTWFSE (175 aa). GTP contacts are provided by residues 38 to 45, 65 to 69, 83 to 86, 150 to 153, and 183 to 185; these read GRSNAGKS, GRTQL, DLPG, TKAD, and FSS. Serine 45 and threonine 67 together coordinate Mg(2+).

The protein belongs to the TRAFAC class TrmE-Era-EngA-EngB-Septin-like GTPase superfamily. EngB GTPase family. Mg(2+) is required as a cofactor.

Necessary for normal cell division and for the maintenance of normal septation. This is Probable GTP-binding protein EngB from Escherichia coli O1:K1 / APEC.